A 483-amino-acid polypeptide reads, in one-letter code: Glutamate--tRNA ligase (483 aa).

A 'HIGH' region motif is present at residues Pro9–Asn19. The 'KMSKS' region signature appears at Lys253–Arg257. Lys256 is an ATP binding site.

The protein belongs to the class-I aminoacyl-tRNA synthetase family. Glutamate--tRNA ligase type 1 subfamily. In terms of assembly, monomer.

The protein resides in the cytoplasm. The enzyme catalyses tRNA(Glu) + L-glutamate + ATP = L-glutamyl-tRNA(Glu) + AMP + diphosphate. Its function is as follows. Catalyzes the attachment of glutamate to tRNA(Glu) in a two-step reaction: glutamate is first activated by ATP to form Glu-AMP and then transferred to the acceptor end of tRNA(Glu). This is Glutamate--tRNA ligase from Mycoplasma capricolum subsp. capricolum (strain California kid / ATCC 27343 / NCTC 10154).